The primary structure comprises 171 residues: Shikimate kinase (171 aa).

14 to 19 contributes to the ATP binding site; that stretch reads GAGKST. Residue S18 participates in Mg(2+) binding. D36, R60, and G82 together coordinate substrate. R120 contacts ATP. Substrate is bound at residue R139. An ATP-binding site is contributed by Q156.

Belongs to the shikimate kinase family. As to quaternary structure, monomer. The cofactor is Mg(2+).

It is found in the cytoplasm. It catalyses the reaction shikimate + ATP = 3-phosphoshikimate + ADP + H(+). It participates in metabolic intermediate biosynthesis; chorismate biosynthesis; chorismate from D-erythrose 4-phosphate and phosphoenolpyruvate: step 5/7. Functionally, catalyzes the specific phosphorylation of the 3-hydroxyl group of shikimic acid using ATP as a cosubstrate. The chain is Shikimate kinase from Shewanella frigidimarina (strain NCIMB 400).